A 65-amino-acid polypeptide reads, in one-letter code: Large ribosomal subunit protein bL35 (65 aa).

Residues Met1 to Lys23 form a disordered region.

It belongs to the bacterial ribosomal protein bL35 family.

This is Large ribosomal subunit protein bL35 from Clostridium perfringens (strain ATCC 13124 / DSM 756 / JCM 1290 / NCIMB 6125 / NCTC 8237 / Type A).